We begin with the raw amino-acid sequence, 63 residues long: ATP synthase subunit epsilon, mitochondrial (63 aa).

In terms of assembly, F-type ATP synthases have 2 components, the catalytic core F(1) and the membrane-embedded component F(0), linked together by a central stalk and a peripheral stalk. The central stalk, also called rotor shaft, is often seen as part of F(1). The peripheral stalk is seen as part of F(0). F(0) contains the membrane channel next to the rotor. F-type ATP synthases form dimers but each monomer functions independently in ATP generation. The dimer consists of 18 different polypeptides: ATP1 (subunit alpha, part of F(1), 3 molecules per monomer), ATP2 (subunit beta, part of F(1), 3 molecules per monomer), ATP3 (subunit gamma, part of the central stalk), ATP4 (subunit b, part of the peripheral stalk), ATP5/OSCP (subunit 5/OSCP, part of the peripheral stalk), ATP6 (subunit a, part of the peripheral stalk), ATP7 (subunit d, part of the peripheral stalk), ATP8 (subunit 8, part of the peripheral stalk), OLI1 (subunit c, part of the rotor, 10 molecules per monomer), ATP14 (subunit h, part of the peripheral stalk), ATP15 (subunit epsilon, part of the central stalk), ATP16 (subunit delta, part of the central stalk), ATP17 (subunit f, part of the peripheral stalk), ATP18 (subunit i/j, part of the peripheral stalk). Dimer-specific subunits are ATP19 (subunit k, at interface between monomers), ATP20 (subunit g, at interface between monomers), TIM11 (subunit e, at interface between monomers). Also contains subunit L.

Its subcellular location is the mitochondrion inner membrane. Its function is as follows. Mitochondrial membrane ATP synthase (F(1)F(0) ATP synthase or Complex V) produces ATP from ADP in the presence of a proton gradient across the membrane which is generated by electron transport complexes of the respiratory chain. F-type ATP synthases consist of two structural domains, F(1) - containing the extramembraneous catalytic core, and F(0) - containing the membrane proton channel, linked together by a central stalk and a peripheral stalk. During catalysis, ATP synthesis in the catalytic domain of F(1) is coupled via a rotary mechanism of the central stalk subunits to proton translocation. Part of the complex F(1) domain and the central stalk which is part of the complex rotary element. Rotation of the central stalk against the surrounding alpha/ATP1(3)beta/ATP2(3) subunits leads to hydrolysis of ATP in three separate catalytic sites on the beta/ATP2 subunits. The sequence is that of ATP synthase subunit epsilon, mitochondrial from Pichia angusta (Yeast).